A 366-amino-acid polypeptide reads, in one-letter code: Neuropeptide Y receptor type 1 (366 aa).

The Extracellular portion of the chain corresponds to 1–39; sequence MNFSTYFENLSVPNNISGNITFPISEDCALPLPMIFTLA. Residues Asn-2, Asn-9, and Asn-15 are each glycosylated (N-linked (GlcNAc...) asparagine). Residues 40–60 traverse the membrane as a helical segment; the sequence is LAYGAVIILGLSGNLALIIII. The Cytoplasmic segment spans residues 61–82; it reads LKQKEMRNVTNILIVNLSFSDL. Residues 83–103 form a helical membrane-spanning segment; that stretch reads LATIMCLPFTLIYTLMDHWIF. The Extracellular segment spans residues 104–111; that stretch reads GEVMCKLN. Cys-108 and Cys-193 are joined by a disulfide. The chain crosses the membrane as a helical span at residues 112–132; sequence EYIQCVSVTVSIFSLVLIAIE. At 133-149 the chain is on the cytoplasmic side; it reads RHQLIINPRGWRPNNRH. A helical membrane pass occupies residues 150-170; the sequence is ACFGITVIWGFAMACSTPLMM. Residues 171-203 are Extracellular-facing; it reads YSVLTDEPFKNISLDSYIGKYVCLEDFPEDKFR. Residue Asn-181 is glycosylated (N-linked (GlcNAc...) asparagine). Residues 204 to 224 traverse the membrane as a helical segment; it reads LSYTTLLFILQYLGPLCFIFV. The Cytoplasmic segment spans residues 225 to 260; it reads CYTKIFLRLKRRNNMMDKIRDNKYRSSETKRINIML. The chain crosses the membrane as a helical span at residues 261–281; it reads LSIVVGFALCWLPFFIFNLVF. Residues 282-294 are Extracellular-facing; sequence DWNHEAVATCNHN. A helical membrane pass occupies residues 295 to 315; it reads LLFLICHLTAMISTCVNPIFY. At 316-366 the chain is on the cytoplasmic side; that stretch reads GFLNKNFQRDLQFFFNFCDFRSREDDYETIAMSTMHTDVSKTSLKQASPIA. A lipid anchor (S-palmitoyl cysteine) is attached at Cys-333.

Belongs to the G-protein coupled receptor 1 family.

Its subcellular location is the cell membrane. Functionally, receptor for neuropeptide Y and peptide YY. The chain is Neuropeptide Y receptor type 1 (npy1r) from Xenopus laevis (African clawed frog).